A 191-amino-acid polypeptide reads, in one-letter code: Adenylate kinase (191 aa).

10-15 (GAGKGT) is a binding site for ATP. Residues 30–59 (STGDIFRANVTEGTPLGVEAKRYMDAGEYV) are NMP. Residues Thr31, Arg36, 57–59 (EYV), 85–88 (GYPR), and Gln92 contribute to the AMP site. Positions 126–136 (QRAQVEGRADD) are LID. Arg127 contacts ATP. AMP is bound by residues Arg133 and Arg144. Residue Gly172 coordinates ATP.

The protein belongs to the adenylate kinase family. As to quaternary structure, monomer.

It is found in the cytoplasm. It catalyses the reaction AMP + ATP = 2 ADP. The protein operates within purine metabolism; AMP biosynthesis via salvage pathway; AMP from ADP: step 1/1. Its function is as follows. Catalyzes the reversible transfer of the terminal phosphate group between ATP and AMP. Plays an important role in cellular energy homeostasis and in adenine nucleotide metabolism. The sequence is that of Adenylate kinase from Nocardioides sp. (strain ATCC BAA-499 / JS614).